The following is a 369-amino-acid chain: Histidinol-phosphate aminotransferase 2 (369 aa).

The residue at position 231 (Lys231) is an N6-(pyridoxal phosphate)lysine.

It belongs to the class-II pyridoxal-phosphate-dependent aminotransferase family. Histidinol-phosphate aminotransferase subfamily. In terms of assembly, homodimer. Pyridoxal 5'-phosphate serves as cofactor.

The enzyme catalyses L-histidinol phosphate + 2-oxoglutarate = 3-(imidazol-4-yl)-2-oxopropyl phosphate + L-glutamate. The protein operates within amino-acid biosynthesis; L-histidine biosynthesis; L-histidine from 5-phospho-alpha-D-ribose 1-diphosphate: step 7/9. This is Histidinol-phosphate aminotransferase 2 from Legionella pneumophila subsp. pneumophila (strain Philadelphia 1 / ATCC 33152 / DSM 7513).